A 117-amino-acid chain; its full sequence is NADH dehydrogenase [ubiquinone] 1 beta subcomplex subunit 9 (117 aa).

Ser2 is modified (N-acetylserine).

The protein belongs to the complex I LYR family. In terms of assembly, complex I is composed of at least 49 different subunits. Expressed in roots, stems, flowers, rosette leaves, cauline leaves and siliques, with the highest expression in the stems.

It localises to the mitochondrion inner membrane. Functionally, accessory subunit of the mitochondrial membrane respiratory chain NADH dehydrogenase (Complex I), that is believed to be not involved in catalysis. Complex I functions in the transfer of electrons from NADH to the respiratory chain. The immediate electron acceptor for the enzyme is believed to be ubiquinone. Is required for correct plant growth and development. The sequence is that of NADH dehydrogenase [ubiquinone] 1 beta subcomplex subunit 9 (CIB22) from Arabidopsis thaliana (Mouse-ear cress).